Here is a 387-residue protein sequence, read N- to C-terminus: uncharacterized protein (387 aa).

Disordered regions lie at residues 1–126 (MDGR…GDDE), 138–169 (GNQG…RNEE), and 275–298 (SSIF…AGNK). Residues 32–45 (SSDHRTSNSAESKK) show a composition bias toward basic and acidic residues. Composition is skewed to polar residues over residues 49–63 (SGKS…NNDN) and 78–93 (DLSS…SKGT). Over residues 155 to 169 (ENGKNDIEKNNRNEE) the composition is skewed to basic and acidic residues. Over residues 275 to 296 (SSIFSDSQAVTTDDEGISSTAG) the composition is skewed to polar residues.

The protein belongs to the ThrE exporter (TC 2.A.79) family.

This is an uncharacterized protein from Saccharomyces cerevisiae (strain ATCC 204508 / S288c) (Baker's yeast).